We begin with the raw amino-acid sequence, 139 residues long: MASAAAGASICIKSASCSPLAPGRISSLRSVSLPVSRKSFPSLRSSKGSFARVSCQAKPETVAKVCRIVKKQLALPDDSEVNGLSKFSALGADSLDTVEIVMGLEEEFGISVEEESAQSIQTVQDAADLIEKLMEKKGH.

Residues 1-55 (MASAAAGASICIKSASCSPLAPGRISSLRSVSLPVSRKSFPSLRSSKGSFARVSC) constitute a chloroplast transit peptide. The region spanning 59–134 (PETVAKVCRI…DAADLIEKLM (76 aa)) is the Carrier domain. Ser-94 bears the O-(pantetheine 4'-phosphoryl)serine mark.

This sequence belongs to the acyl carrier protein (ACP) family. In terms of processing, 4'-phosphopantetheine is transferred from CoA to a specific serine of apo-ACP by acpS. This modification is essential for activity because fatty acids are bound in thioester linkage to the sulfhydryl of the prosthetic group.

The protein resides in the plastid. It localises to the chloroplast. Its pathway is lipid metabolism; fatty acid biosynthesis. Carrier of the growing fatty acid chain in fatty acid biosynthesis. This is Acyl carrier protein 4, chloroplastic (ACL1) from Cuphea lanceolata (Cigar flower).